A 212-amino-acid chain; its full sequence is MQTVAVIDYGMGNLHSVAKALEHVGAGKVLVTSDASVIREADRVVFPGVGAIRDCMAEIRRLGFDSLVREVSQDRPFLGICVGMQALLEHSEENAGVDCIGLFPGQVRFFGKDLQEEGEHLKVPHMGWNEVSQTIDHPLWHDIPDRARFYFVHSYYINAGKPGQVVGRGHYGVDFAAALADGSRFAVQFHPEKSHTHGLQLLQNFIAWDGRW.

One can recognise a Glutamine amidotransferase type-1 domain in the interval 3–212 (TVAVIDYGMG…QNFIAWDGRW (210 aa)). The active-site Nucleophile is the C81. Active-site residues include H190 and E192.

Heterodimer of HisH and HisF.

Its subcellular location is the cytoplasm. It catalyses the reaction 5-[(5-phospho-1-deoxy-D-ribulos-1-ylimino)methylamino]-1-(5-phospho-beta-D-ribosyl)imidazole-4-carboxamide + L-glutamine = D-erythro-1-(imidazol-4-yl)glycerol 3-phosphate + 5-amino-1-(5-phospho-beta-D-ribosyl)imidazole-4-carboxamide + L-glutamate + H(+). It carries out the reaction L-glutamine + H2O = L-glutamate + NH4(+). The protein operates within amino-acid biosynthesis; L-histidine biosynthesis; L-histidine from 5-phospho-alpha-D-ribose 1-diphosphate: step 5/9. Its function is as follows. IGPS catalyzes the conversion of PRFAR and glutamine to IGP, AICAR and glutamate. The HisH subunit catalyzes the hydrolysis of glutamine to glutamate and ammonia as part of the synthesis of IGP and AICAR. The resulting ammonia molecule is channeled to the active site of HisF. The chain is Imidazole glycerol phosphate synthase subunit HisH from Pseudomonas putida (strain ATCC 47054 / DSM 6125 / CFBP 8728 / NCIMB 11950 / KT2440).